A 424-amino-acid polypeptide reads, in one-letter code: Ankyrin repeat domain-containing protein 61 (424 aa).

ANK repeat units lie at residues 80–109 (LSFLPIHLAAKYRKAQSLLCLLEHGADPEA), 113–169 (QGFT…ARVD), 172–201 (HRHCPLHLATIYGTHLVLSILAQNGAQVNA), 205–234 (SSMTPLHMAADILNKEMMQTLIAWGASVNC), 239–278 (TGNTALKLAVSTASSKAGRLLAAGLGCIRLLLVHGAQVNA), 282–311 (DGQAAIHEACFGGREVIINLLLEFEANVNI), and 315–348 (NGESPIHMYLQRGSNIRDTALLARLLFRSYPLRL).

The sequence is that of Ankyrin repeat domain-containing protein 61 (ANKRD61) from Bos taurus (Bovine).